Reading from the N-terminus, the 227-residue chain is Enolase-phosphatase E1 (227 aa).

The protein belongs to the HAD-like hydrolase superfamily. MasA/MtnC family. As to quaternary structure, monomer. It depends on Mg(2+) as a cofactor.

It catalyses the reaction 5-methylsulfanyl-2,3-dioxopentyl phosphate + H2O = 1,2-dihydroxy-5-(methylsulfanyl)pent-1-en-3-one + phosphate. It functions in the pathway amino-acid biosynthesis; L-methionine biosynthesis via salvage pathway; L-methionine from S-methyl-5-thio-alpha-D-ribose 1-phosphate: step 3/6. The protein operates within amino-acid biosynthesis; L-methionine biosynthesis via salvage pathway; L-methionine from S-methyl-5-thio-alpha-D-ribose 1-phosphate: step 4/6. Bifunctional enzyme that catalyzes the enolization of 2,3-diketo-5-methylthiopentyl-1-phosphate (DK-MTP-1-P) into the intermediate 2-hydroxy-3-keto-5-methylthiopentenyl-1-phosphate (HK-MTPenyl-1-P), which is then dephosphorylated to form the acireductone 1,2-dihydroxy-3-keto-5-methylthiopentene (DHK-MTPene). The protein is Enolase-phosphatase E1 of Gluconobacter oxydans (strain 621H) (Gluconobacter suboxydans).